The chain runs to 174 residues: NADPH-dependent 7-cyano-7-deazaguanine reductase (174 aa).

Catalysis depends on Cys-72, which acts as the Thioimide intermediate. The active-site Proton donor is Asp-79. Residues 94–96 (VES) and 113–114 (HE) contribute to the substrate site.

This sequence belongs to the GTP cyclohydrolase I family. QueF type 1 subfamily.

Its subcellular location is the cytoplasm. The enzyme catalyses 7-aminomethyl-7-carbaguanine + 2 NADP(+) = 7-cyano-7-deazaguanine + 2 NADPH + 3 H(+). Its pathway is tRNA modification; tRNA-queuosine biosynthesis. Its function is as follows. Catalyzes the NADPH-dependent reduction of 7-cyano-7-deazaguanine (preQ0) to 7-aminomethyl-7-deazaguanine (preQ1). The polypeptide is NADPH-dependent 7-cyano-7-deazaguanine reductase (Synechococcus elongatus (strain ATCC 33912 / PCC 7942 / FACHB-805) (Anacystis nidulans R2)).